The following is a 415-amino-acid chain: SVF1-like protein YDR222W (415 aa).

This sequence belongs to the SVF1 family.

The protein resides in the cytoplasm. The chain is SVF1-like protein YDR222W from Saccharomyces cerevisiae (strain ATCC 204508 / S288c) (Baker's yeast).